We begin with the raw amino-acid sequence, 1746 residues long: Tenascin (1746 aa).

Positions 1–22 (MGVVTRLLVGTFLASLALPAQG) are cleaved as a signal peptide. Residues 23 to 185 (GVLKKVIRHK…CEPGWKGPNC (163 aa)) form an involved in hexamer formation region. N-linked (GlcNAc...) asparagine glycosylation occurs at asparagine 38. Residues serine 65, serine 70, and serine 72 each carry the phosphoserine modification. O-linked (Xyl...) (chondroitin sulfate) serine glycosylation is present at serine 72. Positions 118–145 (DVKELLSRLEELENLVSSLREQCTSGAG) form a coiled coil. Residues asparagine 166 and asparagine 184 are each glycosylated (N-linked (GlcNAc...) asparagine). Residues 174–186 (CVCEPGWKGPNCS) enclose the EGF-like 1; incomplete domain. EGF-like domains lie at 187–217 (EPEC…EDCS), 218–249 (QLAC…DCSR), 250–280 (ETCP…EDCN), 281–311 (EPLC…EDCG), 312–342 (ELIC…EDCG), 343–373 (RLAC…ADCS), 374–404 (ERRC…EDCG), 405–435 (ELRC…EDCS), 436–466 (QLRC…YDCS), 467–497 (EMSC…EDCR), 498–528 (ELRC…PDCA), 529–559 (DLAC…KDCG), 560–589 (QRRC…GLDC), and 590–620 (GQRS…GEDC). Disulfide bonds link cysteine 190-cysteine 200, cysteine 194-cysteine 205, cysteine 207-cysteine 216, cysteine 221-cysteine 231, cysteine 225-cysteine 236, cysteine 238-cysteine 247, cysteine 252-cysteine 263, cysteine 256-cysteine 268, cysteine 270-cysteine 279, cysteine 284-cysteine 294, cysteine 288-cysteine 299, cysteine 301-cysteine 310, cysteine 315-cysteine 325, cysteine 319-cysteine 330, cysteine 332-cysteine 341, cysteine 346-cysteine 356, cysteine 350-cysteine 361, cysteine 363-cysteine 372, cysteine 377-cysteine 387, cysteine 381-cysteine 392, cysteine 394-cysteine 403, cysteine 408-cysteine 418, cysteine 412-cysteine 423, cysteine 425-cysteine 434, cysteine 439-cysteine 449, cysteine 443-cysteine 454, cysteine 456-cysteine 465, cysteine 470-cysteine 480, cysteine 474-cysteine 485, cysteine 487-cysteine 496, cysteine 501-cysteine 511, cysteine 505-cysteine 516, cysteine 518-cysteine 527, cysteine 532-cysteine 542, cysteine 536-cysteine 547, cysteine 549-cysteine 558, cysteine 563-cysteine 573, cysteine 567-cysteine 578, cysteine 580-cysteine 589, cysteine 594-cysteine 604, cysteine 598-cysteine 609, and cysteine 611-cysteine 620. Asparagine 327 carries an N-linked (GlcNAc...) asparagine glycan. Fibronectin type-III domains lie at 625–717 (PPKD…TPEG), 718–801 (LKFK…VTTT), 805–894 (APSQ…TGLD), 895–988 (APRN…LDPP), 989–1075 (KDFR…AGEP), 1076–1166 (EIGN…EAEP), 1167–1256 (EVDN…TAMG), 1257–1346 (SPKE…ALDG), 1347–1433 (PSGL…TDLD), and 1434–1522 (SPRD…IGLL). Asparagine 788 carries an N-linked (GlcNAc...) asparagine glycan. Threonine 905 carries the post-translational modification Phosphothreonine. Residues asparagine 1034, asparagine 1079, and asparagine 1121 are each glycosylated (N-linked (GlcNAc...) asparagine). Residue asparagine 1354 is glycosylated (N-linked (GlcNAc...) asparagine). In terms of domain architecture, Fibrinogen C-terminal spans 1520 to 1735 (GLLYPFPRDC…FAEMKLRPSN (216 aa)).

The protein belongs to the tenascin family. As to quaternary structure, homohexamer; disulfide-linked. A homotrimer may be formed in the triple coiled-coil region and may be stabilized by disulfide rings at both ends. Two of such half-hexabrachions may be disulfide linked within the central globule. Interacts with CSPG4. Interacts (via the 3rd fibronectin type-III domain) with integrin ITGA9:ITGB1. Submaxillary glands and brain.

It localises to the secreted. Its subcellular location is the extracellular space. The protein resides in the extracellular matrix. Extracellular matrix protein implicated in guidance of migrating neurons as well as axons during development, synaptic plasticity as well as neuronal regeneration. Promotes neurite outgrowth from cortical neurons grown on a monolayer of astrocytes. Ligand for integrins alpha-8/beta-1, alpha-9/beta-1, alpha-V/beta-3 and alpha-V/beta-6. In tumors, stimulates angiogenesis by elongation, migration and sprouting of endothelial cells. The protein is Tenascin (TNC) of Sus scrofa (Pig).